A 177-amino-acid polypeptide reads, in one-letter code: ATP synthase subunit delta (177 aa).

The protein belongs to the ATPase delta chain family. As to quaternary structure, F-type ATPases have 2 components, F(1) - the catalytic core - and F(0) - the membrane proton channel. F(1) has five subunits: alpha(3), beta(3), gamma(1), delta(1), epsilon(1). F(0) has three main subunits: a(1), b(2) and c(10-14). The alpha and beta chains form an alternating ring which encloses part of the gamma chain. F(1) is attached to F(0) by a central stalk formed by the gamma and epsilon chains, while a peripheral stalk is formed by the delta and b chains.

Its subcellular location is the cell inner membrane. F(1)F(0) ATP synthase produces ATP from ADP in the presence of a proton or sodium gradient. F-type ATPases consist of two structural domains, F(1) containing the extramembraneous catalytic core and F(0) containing the membrane proton channel, linked together by a central stalk and a peripheral stalk. During catalysis, ATP synthesis in the catalytic domain of F(1) is coupled via a rotary mechanism of the central stalk subunits to proton translocation. Its function is as follows. This protein is part of the stalk that links CF(0) to CF(1). It either transmits conformational changes from CF(0) to CF(1) or is implicated in proton conduction. The chain is ATP synthase subunit delta from Enterobacter sp. (strain 638).